Here is a 276-residue protein sequence, read N- to C-terminus: 4-deoxy-L-threo-5-hexosulose-uronate ketol-isomerase (276 aa).

4 residues coordinate Zn(2+): histidine 194, histidine 196, glutamate 201, and histidine 243.

The protein belongs to the KduI family. Zn(2+) is required as a cofactor.

It catalyses the reaction 5-dehydro-4-deoxy-D-glucuronate = 3-deoxy-D-glycero-2,5-hexodiulosonate. The protein operates within glycan metabolism; pectin degradation; 2-dehydro-3-deoxy-D-gluconate from pectin: step 4/5. Catalyzes the isomerization of 5-dehydro-4-deoxy-D-glucuronate to 3-deoxy-D-glycero-2,5-hexodiulosonate. This is 4-deoxy-L-threo-5-hexosulose-uronate ketol-isomerase from Caldicellulosiruptor bescii (strain ATCC BAA-1888 / DSM 6725 / KCTC 15123 / Z-1320) (Anaerocellum thermophilum).